The sequence spans 248 residues: Molybdate/tungstate transport system permease protein WtpB (248 aa).

Residues 1–9 lie on the Cytoplasmic side of the membrane; the sequence is MGGRDYTLY. Residues 10–30 traverse the membrane as a helical segment; the sequence is LFAALGSFLIVYIALPIIVIF. The Extracellular segment spans residues 31–56; sequence TKQALDFRMLVKTIHDPLVIEALRNS. One can recognise an ABC transmembrane type-1 domain in the interval 53-239; the sequence is LRNSLLTATA…GISLGIFVVL (187 aa). The helical transmembrane segment at 57–77 threads the bilayer; sequence LLTATATALISLLFGVPLGYV. Residues 78–91 lie on the Cytoplasmic side of the membrane; the sequence is LARKDFRGKSLVQA. Residues 92-112 traverse the membrane as a helical segment; sequence IIDVPIVIPHSVVGIMLLVTF. Residues 113–115 are Extracellular-facing; the sequence is SNA. A helical membrane pass occupies residues 116–136; that stretch reads ILDSYKGIIAAMLFVSAPFAI. Topologically, residues 137–164 are cytoplasmic; it reads NSARDGFLAVDEKLEHVARTLGASKLRT. Residues 165 to 185 traverse the membrane as a helical segment; that stretch reads FFSISLPIALPSIASGAIMAW. Over 186-223 the chain is Extracellular; it reads ARGISEVGAILIVAYYPKTAQVLVMEYFNNYGLRASRP. A helical transmembrane segment spans residues 224 to 244; the sequence is ISVILMGISLGIFVVLRWLIG. The Cytoplasmic portion of the chain corresponds to 245–248; the sequence is KAKS.

The protein belongs to the binding-protein-dependent transport system permease family. As to quaternary structure, the complex is composed of two ATP-binding proteins (WtpC), two transmembrane proteins (WtpB) and a solute-binding protein (WtpA).

It is found in the cell membrane. In terms of biological role, part of the ABC transporter complex WtpABC involved in molybdate/tungstate import. Probably responsible for the translocation of the substrate across the membrane. The protein is Molybdate/tungstate transport system permease protein WtpB (wtpB) of Pyrococcus abyssi (strain GE5 / Orsay).